Reading from the N-terminus, the 963-residue chain is MLYIRKKMTSMIVKTTPELFKGNGVFRTDHLGENRMVSRSNRLGDGSNRFPRTGTIHCQRLSIAKTGLHRETKARAILSPVSDPAASIAQKRVFTFGKGRSEGNKGMKSLLGGKGANLAEMASIGLSVPPGLTISTEACQQYQIAGKKLPEGLWEEILEGLSFIERDIGASLADPSKPLLLSVRSGAAISMPGMMDTVLNLGLNDQVVVGLAAKSGERFAYDSFRRFLDMFGDVVMGIPHAKFEEKLERMKERKGVKNDTDLSAADLKELVEQYKSVYLEAKGQEFPSDPKKQLELAIEAVFDSWDSPRANKYRSINQITGLKGTAVNIQCMVFGNMGDTSGTGVLFTRNPSTGEKKLYGEFLVNAQGEDVVAGIRTPEDLDTMKRFMPEAYAELVENCNILERHYKDMMDIEFTVQEERLWMLQCRAGKRTGKGAVKIAVDMVGEGLVEKSSAIKMVEPQHLDQLLHPQFHDPSGYREKVVAKGLPASPGAAVGQVVFTAEEAEAWHSQGKTVILVRTETSPDDVGGMHAAEGILTARGGMTSHAAVVARGWGKCCIAGCSEIRVDENHKVLLIGDLTINEGEWISMNGSTGEVILGKQALAPPALSPDLETFMSWADAIRRLKVMANADTPEDAIAARKNGAQGIGLCRTEHMFFGADRIKAVRKMIMAVTTEQRKASLDILLPYQRSDFEGIFRAMDGLPVTIRLLDPPLHEFLPEGDLDNIVHELAEETGVKEDEVLSRIEKLSEVNPMLGFRGCRLGISYPELTEMQARAIFEAAASMQDQGVTVIPEIMVPLVGTPQELGHQVDVIRKVAKKVFAEKGHTVSYKVGTMIEIPRAALIADEIAKEAEFFSFGTNDLTQMTFGYSRDDVGKFLPIYLAKGILQHDPFEVLDQQGVGQLIKMATEKGRAARPSLKVGICGEHGGDPSSVGFFAEAGLDYVSCSPFRVPIARLAAAQVVVA.

Residues 1 to 76 (MLYIRKKMTS…GLHRETKARA (76 aa)) constitute a chloroplast transit peptide. At Thr-543 the chain carries Phosphothreonine; by PDRP1. The active-site Tele-phosphohistidine intermediate is the His-545. Substrate-binding residues include Arg-651, Arg-707, Glu-836, Gly-857, Thr-858, Asn-859, and Asp-860. Residue Glu-836 coordinates Mg(2+). Asp-860 is a Mg(2+) binding site. Residue Cys-922 is the Proton donor of the active site.

It belongs to the PEP-utilizing enzyme family. Homotetramer. Interacts with RP1 and RP2. Requires Mg(2+) as cofactor. Post-translationally, phosphorylation of Thr-543 in the dark inactivates the enzyme. Dephosphorylation upon light stimulation reactivates the enzyme. In terms of tissue distribution, isoform 1 is expressed in leaves, flowers and siliques. Isoform 2 is found in cotyledons, rosette and cauline leaves, petioles, flowers and siliques.

It is found in the plastid. Its subcellular location is the chloroplast. It localises to the cytoplasm. The catalysed reaction is pyruvate + phosphate + ATP = phosphoenolpyruvate + AMP + diphosphate + H(+). Activated by light-induced dephosphorylation. Inhibited by dark-induced phosphorylation. Both reactions are catalyzed by PDRP1. Formation of phosphoenolpyruvate. May be involved in regulating the flux of carbon into starch and fatty acids of seeds and in the remobilization of nitrogen reserves in senescing leaves. This chain is Pyruvate, phosphate dikinase 1, chloroplastic (PPDK), found in Arabidopsis thaliana (Mouse-ear cress).